A 90-amino-acid polypeptide reads, in one-letter code: DNA-directed RNA polymerase subunit omega (90 aa).

The tract at residues 70–90 (QEQQEQEAAELAAVSSIMHNR) is disordered.

The protein belongs to the RNA polymerase subunit omega family. In terms of assembly, the RNAP catalytic core consists of 2 alpha, 1 beta, 1 beta' and 1 omega subunit. When a sigma factor is associated with the core the holoenzyme is formed, which can initiate transcription.

It carries out the reaction RNA(n) + a ribonucleoside 5'-triphosphate = RNA(n+1) + diphosphate. In terms of biological role, promotes RNA polymerase assembly. Latches the N- and C-terminal regions of the beta' subunit thereby facilitating its interaction with the beta and alpha subunits. This is DNA-directed RNA polymerase subunit omega from Vibrio cholerae serotype O1 (strain ATCC 39541 / Classical Ogawa 395 / O395).